A 330-amino-acid chain; its full sequence is Small ribosomal subunit protein uS2 (330 aa).

Belongs to the universal ribosomal protein uS2 family.

This is Small ribosomal subunit protein uS2 from Rhodopseudomonas palustris (strain BisA53).